Reading from the N-terminus, the 372-residue chain is 4-hydroxy-3-methylbut-2-en-1-yl diphosphate synthase (flavodoxin) (372 aa).

The [4Fe-4S] cluster site is built by cysteine 270, cysteine 273, cysteine 305, and glutamate 312.

Belongs to the IspG family. [4Fe-4S] cluster serves as cofactor.

It carries out the reaction (2E)-4-hydroxy-3-methylbut-2-enyl diphosphate + oxidized [flavodoxin] + H2O + 2 H(+) = 2-C-methyl-D-erythritol 2,4-cyclic diphosphate + reduced [flavodoxin]. It participates in isoprenoid biosynthesis; isopentenyl diphosphate biosynthesis via DXP pathway; isopentenyl diphosphate from 1-deoxy-D-xylulose 5-phosphate: step 5/6. Its function is as follows. Converts 2C-methyl-D-erythritol 2,4-cyclodiphosphate (ME-2,4cPP) into 1-hydroxy-2-methyl-2-(E)-butenyl 4-diphosphate. This is 4-hydroxy-3-methylbut-2-en-1-yl diphosphate synthase (flavodoxin) from Vibrio parahaemolyticus serotype O3:K6 (strain RIMD 2210633).